The chain runs to 334 residues: Mevalonate kinase (334 aa).

110–120 (PVGAGLGSSAA) lines the ATP pocket. Aspartate 161 serves as the catalytic Proton acceptor.

It belongs to the GHMP kinase family. Mevalonate kinase subfamily. In terms of assembly, homodimer. Requires Mg(2+) as cofactor.

The protein resides in the cytoplasm. It carries out the reaction (R)-mevalonate + ATP = (R)-5-phosphomevalonate + ADP + H(+). Its pathway is isoprenoid biosynthesis; isopentenyl diphosphate biosynthesis via mevalonate pathway; isopentenyl diphosphate from (R)-mevalonate: step 1/3. Catalyzes the phosphorylation of (R)-mevalonate (MVA) to (R)-mevalonate 5-phosphate (MVAP). Functions in the mevalonate (MVA) pathway leading to isopentenyl diphosphate (IPP), a key precursor for the biosynthesis of isoprenoid compounds such as archaeal membrane lipids. The protein is Mevalonate kinase of Pyrococcus furiosus (strain ATCC 43587 / DSM 3638 / JCM 8422 / Vc1).